The sequence spans 526 residues: Peptide chain release factor 3 (526 aa).

Positions 9–277 (NKRRTFAIIS…DFVEYAPGPQ (269 aa)) constitute a tr-type G domain. GTP-binding positions include 18–25 (SHPDAGKT), 86–90 (DTPGH), and 140–143 (NKLD).

Belongs to the TRAFAC class translation factor GTPase superfamily. Classic translation factor GTPase family. PrfC subfamily.

The protein resides in the cytoplasm. Its function is as follows. Increases the formation of ribosomal termination complexes and stimulates activities of RF-1 and RF-2. It binds guanine nucleotides and has strong preference for UGA stop codons. It may interact directly with the ribosome. The stimulation of RF-1 and RF-2 is significantly reduced by GTP and GDP, but not by GMP. This Legionella pneumophila (strain Paris) protein is Peptide chain release factor 3.